Here is a 47-residue protein sequence, read N- to C-terminus: PhoP/PhoQ regulator MgrB (47 aa).

Residues 6 to 26 traverse the membrane as a helical segment; that stretch reads WAILLAVLVACLLLWMQTLNV.

Belongs to the MgrB family. In terms of assembly, may form homooligomers. Probably interacts with the periplasmic domain of PhoQ.

It localises to the cell inner membrane. In terms of biological role, phoP-regulated transcription is redox-sensitive, being activated when the periplasm becomes more reducing. MgrB acts between DsbA/DsbB and PhoP/PhoQ in this pathway. Represses PhoP/PhoQ signaling, possibly by binding to the periplasmic domain of PhoQ, altering its activity and that of downstream effector PhoP. The protein is PhoP/PhoQ regulator MgrB of Cronobacter sakazakii (strain ATCC BAA-894) (Enterobacter sakazakii).